The primary structure comprises 89 residues: Small ribosomal subunit protein uS15 (89 aa).

The protein belongs to the universal ribosomal protein uS15 family. Part of the 30S ribosomal subunit. Forms a bridge to the 50S subunit in the 70S ribosome, contacting the 23S rRNA.

One of the primary rRNA binding proteins, it binds directly to 16S rRNA where it helps nucleate assembly of the platform of the 30S subunit by binding and bridging several RNA helices of the 16S rRNA. Functionally, forms an intersubunit bridge (bridge B4) with the 23S rRNA of the 50S subunit in the ribosome. The chain is Small ribosomal subunit protein uS15 from Gluconobacter oxydans (strain 621H) (Gluconobacter suboxydans).